A 151-amino-acid chain; its full sequence is Ribosome maturation factor RimP (151 aa).

Belongs to the RimP family.

It is found in the cytoplasm. Its function is as follows. Required for maturation of 30S ribosomal subunits. The polypeptide is Ribosome maturation factor RimP (Shewanella denitrificans (strain OS217 / ATCC BAA-1090 / DSM 15013)).